The chain runs to 391 residues: Mannose-6-phosphate isomerase (391 aa).

Zn(2+) is bound by residues Gln-97, His-99, Glu-134, and His-255. The active site involves Arg-274. Residue Lys-280 is modified to N6-acetyllysine.

This sequence belongs to the mannose-6-phosphate isomerase type 1 family. It depends on Zn(2+) as a cofactor.

It is found in the cytoplasm. The catalysed reaction is D-mannose 6-phosphate = D-fructose 6-phosphate. Functionally, involved in the conversion of glucose to GDP-L-fucose, which can be converted to L-fucose, a capsular polysaccharide. This chain is Mannose-6-phosphate isomerase (manA), found in Escherichia coli (strain K12).